Consider the following 350-residue polypeptide: Patr class I histocompatibility antigen, alpha chain E (350 aa).

Positions 1–21 (MVDGTLLLLLSEALALTQTWA) are cleaved as a signal peptide. Positions 22–111 (GSHSLKYFHT…LRGYYNQSEA (90 aa)) are alpha-1. The Extracellular segment spans residues 22-305 (GSHSLKYFHT…KPASQPTIPI (284 aa)). Residue N107 is glycosylated (N-linked (GlcNAc...) asparagine). An alpha-2 region spans residues 112–203 (GSHTLQWMHG…EKGKETLLHL (92 aa)). 2 cysteine pairs are disulfide-bonded: C122–C185 and C224–C280. The alpha-3 stretch occupies residues 204–295 (EPPKTHVTHH…GLPEPLTLRW (92 aa)). In terms of domain architecture, Ig-like C1-type spans 206-294 (PKTHVTHHPI…EGLPEPLTLR (89 aa)). Residues 296–305 (KPASQPTIPI) are connecting peptide. The helical transmembrane segment at 306 to 329 (VGIIAGLVLLGSVVSGAVVAAVMW) threads the bilayer. Over 330-350 (RKKSSGGKGRSYSKAEWSDSA) the chain is Cytoplasmic.

Belongs to the MHC class I family. Heterodimer of an alpha chain and a beta chain (beta-2-microglobulin).

The protein localises to the membrane. Functionally, preferably binds to a peptide derived from the signal sequence of most HLA-A, -B, -C and -G molecules. The protein is Patr class I histocompatibility antigen, alpha chain E (Patr-E) of Pan troglodytes (Chimpanzee).